The chain runs to 164 residues: Transcriptional repressor NrdR (164 aa).

A zinc finger spans residues 3–34 (CPFCSAQDTKVIDSRLVADGVQIRRRRECLSC). Residues 49 to 139 (PRLVKTDGTR…VYRSFQDISE (91 aa)) form the ATP-cone domain.

This sequence belongs to the NrdR family. Zn(2+) serves as cofactor.

Functionally, negatively regulates transcription of bacterial ribonucleotide reductase nrd genes and operons by binding to NrdR-boxes. This chain is Transcriptional repressor NrdR, found in Alcanivorax borkumensis (strain ATCC 700651 / DSM 11573 / NCIMB 13689 / SK2).